The primary structure comprises 360 residues: uncharacterized protein (360 aa).

A THUMP domain is found at 45–148 (EDIEDKILQI…KNKTYVSITP (104 aa)).

This is an uncharacterized protein from Methanocaldococcus jannaschii (strain ATCC 43067 / DSM 2661 / JAL-1 / JCM 10045 / NBRC 100440) (Methanococcus jannaschii).